A 544-amino-acid polypeptide reads, in one-letter code: Peptide chain release factor 3 (544 aa).

The tr-type G domain maps to 17–286 (EKRRNFAIIS…SFLDYGLAPR (270 aa)). GTP-binding positions include 26–33 (SHPDAGKT), 94–98 (DTPGH), and 148–151 (NKMD).

This sequence belongs to the TRAFAC class translation factor GTPase superfamily. Classic translation factor GTPase family. PrfC subfamily.

It localises to the cytoplasm. Functionally, increases the formation of ribosomal termination complexes and stimulates activities of RF-1 and RF-2. It binds guanine nucleotides and has strong preference for UGA stop codons. It may interact directly with the ribosome. The stimulation of RF-1 and RF-2 is significantly reduced by GTP and GDP, but not by GMP. The protein is Peptide chain release factor 3 of Microcystis aeruginosa (strain NIES-843 / IAM M-2473).